Consider the following 63-residue polypeptide: Alpha-conotoxin-like PuSG1.1 (63 aa).

Residues Met1–Gly21 form the signal peptide. The propeptide occupies Ala22–Arg43. 2 cysteine pairs are disulfide-bonded: Cys46-Cys52 and Cys47-Cys60. The tract at residues Pro48–Pro50 is lacks the Ser-Xaa-Pro motif that is crucial for potent interaction with nAChR.

This sequence belongs to the conotoxin A superfamily. Expressed by the salivary gland.

The protein resides in the secreted. Its function is as follows. Alpha-conopeptides-like may act on postsynaptic membranes, they bind to the nicotinic acetylcholine receptors (nAChR) and thus inhibit them. Has possibly a distinct nAChR binding mode from other alpha-conotoxins, due to a different three residue motif (lacks the Ser-Xaa-Pro motif). The chain is Alpha-conotoxin-like PuSG1.1 from Conus pulicarius (Flea-bitten cone).